Consider the following 417-residue polypeptide: Serine hydroxymethyltransferase (417 aa).

Residues leucine 112 and 116–118 (GHL) each bind (6S)-5,6,7,8-tetrahydrofolate. Lysine 221 is subject to N6-(pyridoxal phosphate)lysine. A (6S)-5,6,7,8-tetrahydrofolate-binding site is contributed by glutamate 247.

Belongs to the SHMT family. As to quaternary structure, homodimer. Pyridoxal 5'-phosphate serves as cofactor.

It localises to the cytoplasm. The enzyme catalyses (6R)-5,10-methylene-5,6,7,8-tetrahydrofolate + glycine + H2O = (6S)-5,6,7,8-tetrahydrofolate + L-serine. The protein operates within one-carbon metabolism; tetrahydrofolate interconversion. Its pathway is amino-acid biosynthesis; glycine biosynthesis; glycine from L-serine: step 1/1. Catalyzes the reversible interconversion of serine and glycine with tetrahydrofolate (THF) serving as the one-carbon carrier. This reaction serves as the major source of one-carbon groups required for the biosynthesis of purines, thymidylate, methionine, and other important biomolecules. Also exhibits THF-independent aldolase activity toward beta-hydroxyamino acids, producing glycine and aldehydes, via a retro-aldol mechanism. The protein is Serine hydroxymethyltransferase of Borreliella afzelii (strain PKo) (Borrelia afzelii).